Reading from the N-terminus, the 399-residue chain is Acetylornithine aminotransferase (399 aa).

Pyridoxal 5'-phosphate-binding positions include 97–98 (GA) and F130. A N(2)-acetyl-L-ornithine-binding site is contributed by R133. 215-218 (DEVQ) is a pyridoxal 5'-phosphate binding site. K244 is subject to N6-(pyridoxal phosphate)lysine. A N(2)-acetyl-L-ornithine-binding site is contributed by T272. Position 273 (T273) interacts with pyridoxal 5'-phosphate.

This sequence belongs to the class-III pyridoxal-phosphate-dependent aminotransferase family. ArgD subfamily. Homodimer. Requires pyridoxal 5'-phosphate as cofactor.

The protein resides in the cytoplasm. It catalyses the reaction N(2)-acetyl-L-ornithine + 2-oxoglutarate = N-acetyl-L-glutamate 5-semialdehyde + L-glutamate. The protein operates within amino-acid biosynthesis; L-arginine biosynthesis; N(2)-acetyl-L-ornithine from L-glutamate: step 4/4. This Mesorhizobium japonicum (strain LMG 29417 / CECT 9101 / MAFF 303099) (Mesorhizobium loti (strain MAFF 303099)) protein is Acetylornithine aminotransferase.